The chain runs to 839 residues: Protein translocase subunit SecA (839 aa).

ATP-binding positions include Gln-85, 103-107, and Asp-493; that span reads GEGKT. Basic and acidic residues predominate over residues 780 to 790; it reads QIHEQERERAS. Residues 780–839 form a disordered region; it reads QIHEQERERASQRATTAAPQNIQSQQSANTDDLPKVERNEACPCGSGKKFKNCHGRKSFS. Positions 791–809 are enriched in polar residues; sequence QRATTAAPQNIQSQQSANT. Zn(2+) contacts are provided by Cys-821, Cys-823, Cys-832, and His-833. The span at 827-839 shows a compositional bias: basic residues; that stretch reads KKFKNCHGRKSFS.

The protein belongs to the SecA family. In terms of assembly, monomer and homodimer. Part of the essential Sec protein translocation apparatus which comprises SecA, SecYEG and auxiliary proteins SecDF. Other proteins may also be involved. Requires Zn(2+) as cofactor.

Its subcellular location is the cell membrane. It is found in the cytoplasm. It catalyses the reaction ATP + H2O + cellular proteinSide 1 = ADP + phosphate + cellular proteinSide 2.. Functionally, part of the Sec protein translocase complex. Interacts with the SecYEG preprotein conducting channel. Has a central role in coupling the hydrolysis of ATP to the transfer of proteins into and across the cell membrane, serving as an ATP-driven molecular motor driving the stepwise translocation of polypeptide chains across the membrane. The chain is Protein translocase subunit SecA from Streptococcus pyogenes serotype M28 (strain MGAS6180).